Consider the following 76-residue polypeptide: uncharacterized protein (76 aa).

Positions 27-76 are disordered; sequence SINNGEGSSVVHRDATAPPTPPVVPTSTLQVPGLQRARTPEPNDPRVANL.

This is an uncharacterized protein from Caenorhabditis elegans.